The following is a 333-amino-acid chain: Squamosa promoter-binding-like protein 8 (333 aa).

The disordered stretch occupies residues 1–28 (MLDYEWDNPSSIVLSGDERNPDSDPTRS). Positions 16–25 (GDERNPDSDP) are enriched in basic and acidic residues. Residues 179–269 (MANSLSTPRC…RKCHQSASAT (91 aa)) form a sufficient and necessary for DNA binding region. The segment at 185–262 (TPRCQAEGCN…ADHNRRRRKC (78 aa)) adopts an SBP-type zinc-finger fold. 8 residues coordinate Zn(2+): cysteine 188, cysteine 193, cysteine 210, histidine 213, cysteine 229, cysteine 232, histidine 236, and cysteine 248. The Bipartite nuclear localization signal motif lies at 245-261 (KRSCRKRLADHNRRRRK). 2 disordered regions span residues 254 to 303 (DHNR…TISL) and 314 to 333 (TASSSTSASSSSNSMFFSSG). Polar residues predominate over residues 264–284 (QSASATQDTGTGKTTPKSPND). Residues 289–299 (ASSSPSSNAPP) are compositionally biased toward low complexity.

Zn(2+) is required as a cofactor. Expressed in shoot apical region and early floral tissues. Transcripts levels increase in developing pollen sacs, and decrease in later stage of anther development. Strongly expressed in the placental region of the carpels.

The protein resides in the nucleus. It localises to the cytoplasm. In terms of biological role, trans-acting factor that binds specifically to the consensus nucleotide sequence 5'-TNCGTACAA-3'. Binds specifically to the 5'-GTAC-3' core sequence. Involved in development and floral organogenesis. Required for ovule differentiation, pollen production, filament elongation, seed formation and siliques elongation. Also seems to play a role in the formation of trichomes on sepals. May positively modulate gibberellin (GA) signaling in flower. In Arabidopsis thaliana (Mouse-ear cress), this protein is Squamosa promoter-binding-like protein 8 (SPL8).